Here is a 1093-residue protein sequence, read N- to C-terminus: Non-canonical non-ribosomal peptide synthetase ascB (1093 aa).

Residues 1–26 show a composition bias toward low complexity; that stretch reads MTVNGHHTNGVNGANGTNGHANGSNG. A disordered region spans residues 1 to 27; it reads MTVNGHHTNGVNGANGTNGHANGSNGI. The adenylation (A) domain stretch occupies residues 35–392; that stretch reads EIVPFVKPQV…LSLTFAPTDN (358 aa). Positions 591-678 constitute a Carrier domain; it reads DNLEQNLKSL…EIAAALTKGS (88 aa). Serine 627 is subject to O-(pantetheine 4'-phosphoryl)serine. A thioester reductase (TR) domain region spans residues 721–971; that stretch reads LTGATGSLGS…IPVDDAASTV (251 aa).

This sequence belongs to the NRP synthetase family.

It catalyses the reaction ilicicolinate B + AH2 + ATP = ilicicolin B + A + AMP + diphosphate. Its pathway is secondary metabolite biosynthesis; terpenoid biosynthesis. Functionally, non-canonical non-ribosomal peptide synthetase; part of the asc-1 gene cluster that mediates the biosynthesis of both ascochlorin and ascofuranone, a strong inhibitor of cyanide-insensitive alternative oxidases and a promising drug candidate against African trypanosomiasis. The first step in the pathway is performed by the non-reducing polyketide synthase ascC that produces orsellinic acid by condensing acetyl-CoA with 3 malonyl-CoA units. Orsellinic acid is then prenylated by the prenyltransferase ascA to yield ilicicolinic acid B. Ilicicolinic acid B is further reduced to ilicicolin B by the reductase ascB. The halogenase ascD then chlorinates ilicicolin B to produce ilicicolin A which is converted to ilicicolin A epoxide by the cytochrome P450 monooxygenase ascE that catalyzes stereoselective epoxidation of the terminal double bond of the prenyl group. Ilicicolin A epoxide is the last common precursor for the biosynthesis of ascofuranone and ascochlorin. The terpene cyclase ascF produces a monocyclic terpene, and the cyclization reaction is proposed to be initiated by protonation of the terminal epoxide of ilicicolin A epoxide to generate a monocyclic tertiarycation, which is followed by a series of hydride and methyl shifts with abstraction of proton, leading to the formation of the (14S,15R,19R)-trimethylcyclohexanone ring structure of ilicicolin C, which is finally reduced to ascochlorin by the dehydrogenase ascG. On the other hand, ilicicolin A epoxide is hydroxylated by the cytochrome P450 monooxygenase ascH, and the resultant product is cyclized by the terpene cyclase ascI to ascofuranol via protonation-initiated epoxide ring opening, which facilitates the 6-endo-tet cyclization to form the tetrahy-drofuran ring. Finally, ascofuranol is oxidized into ascofuranone by ascJ. The protein is Non-canonical non-ribosomal peptide synthetase ascB of Acremonium egyptiacum (Oospora egyptiaca).